Reading from the N-terminus, the 566-residue chain is Oxygen-dependent choline dehydrogenase (566 aa).

An FAD-binding site is contributed by 7–36 (DYIICGAGSAGNVLATRLTEDPNVTVLLLE). The segment at 183 to 203 (QQEGFGPMDRTVTPKGRRAST) is disordered. Residue His-474 is the Proton acceptor of the active site.

This sequence belongs to the GMC oxidoreductase family. The cofactor is FAD.

The enzyme catalyses choline + A = betaine aldehyde + AH2. It carries out the reaction betaine aldehyde + NAD(+) + H2O = glycine betaine + NADH + 2 H(+). It participates in amine and polyamine biosynthesis; betaine biosynthesis via choline pathway; betaine aldehyde from choline (cytochrome c reductase route): step 1/1. Functionally, involved in the biosynthesis of the osmoprotectant glycine betaine. Catalyzes the oxidation of choline to betaine aldehyde and betaine aldehyde to glycine betaine at the same rate. The polypeptide is Oxygen-dependent choline dehydrogenase (Burkholderia ambifaria (strain ATCC BAA-244 / DSM 16087 / CCUG 44356 / LMG 19182 / AMMD) (Burkholderia cepacia (strain AMMD))).